The sequence spans 600 residues: ATP-dependent ubiquitin transferase-like protein Cap2 (600 aa).

The segment at 1–158 is E2-like domain; the sequence is MSTVVQQVPA…QEKLATTGDA (158 aa). The active-site For E2-like domain is Cys109. Positions 159–373 are linker domain; it reads VELPAFPDQS…DQLRTRGEAA (215 aa). The interval 375–600 is adenylation plus E1-like domain; sequence DIRSKKVLII…GTVEKEPHEY (226 aa). The active-site For E1-like domain is the Cys548.

The protein in the C-terminal section; belongs to the HesA/MoeB/ThiF family. As to quaternary structure, crystallizes as a Cap2 homodimer bound on each side by a CdnD monomer.

Functionally, CD-NTase priming component of a CBASS antiviral system. CBASS (cyclic oligonucleotide-based antiphage signaling system) provides immunity against bacteriophages. The CD-NTase protein (CdnD) synthesizes cyclic nucleotides in response to infection; these serve as specific second messenger signals. The signals activate a diverse range of effectors, leading to bacterial cell death and thus abortive phage infection. A type II-C(AAG) CBASS system. Primes CdnD; acts as a protein transferase, conjugating CdnD, the CD-NTase, to unidentified target(s) in the cell via an E1-E2 ubiquitin transferase-like mechanism. Upon phage infection CdnD activates and makes cyclic nucleotides. During the conjugation reaction CdnD is transiently attached to AMP. Protein conjugation requires ATP. In terms of biological role, protects E.coli against phage T2 infection. When the cdnD-cap2-cap3-cap4 operon is introduced in E.coli there is a more than 10(3) decrease in the efficiency of T2 plaque formation. The operon does not protect against phage T5 and only about 10-fold against T7. This Enterobacter hormaechei subsp. hoffmannii (strain UCI 50) protein is ATP-dependent ubiquitin transferase-like protein Cap2.